Reading from the N-terminus, the 579-residue chain is Small conductance calcium-activated potassium channel protein 2 (579 aa).

Disordered regions lie at residues Met-1–Ala-54 and Thr-90–Gln-115. The span at Thr-90–Ser-103 shows a compositional bias: gly residues. Residues Ala-138–Gly-158 traverse the membrane as a helical segment. A Phosphotyrosine modification is found at Tyr-160. A helical membrane pass occupies residues Leu-168–Tyr-188. The helical transmembrane segment at Ile-214–Thr-234 threads the bilayer. A helical transmembrane segment spans residues Ile-256–His-276. A helical membrane pass occupies residues Leu-305–Ala-325. Positions Phe-345–Val-365 form an intramembrane region, pore-forming. A helical transmembrane segment spans residues Val-374–Ala-394. The calmodulin-binding stretch occupies residues Asp-412 to Ile-488. The segment at Val-551–Ser-579 is disordered. The segment covering Ser-568–Ser-579 has biased composition (low complexity).

Belongs to the potassium channel KCNN family. KCa2.2/KCNN2 subfamily. As to quaternary structure, homodimer. Heteromultimer with KCNN1 and KCNN3. The complex is composed of 4 channel subunits each of which binds to a calmodulin subunit which regulates the channel activity through calcium-binding. Interacts (via N-terminal domain) with MPP2. As to expression, expressed in atrial myocytes (at protein level). Widely expressed.

It localises to the membrane. Its subcellular location is the cytoplasm. The protein localises to the myofibril. It is found in the sarcomere. The protein resides in the z line. The catalysed reaction is K(+)(in) = K(+)(out). With respect to regulation, inhibited by bee venom neurotoxin apamin. Inhibited by UCL 1684 and tetraethylammonium (TEA). Its function is as follows. Small conductance calcium-activated potassium channel that mediates the voltage-independent transmembrane transfer of potassium across the cell membrane through a constitutive interaction with calmodulin which binds the intracellular calcium allowing its opening. The current is characterized by a voltage-independent activation, an intracellular calcium concentration increase-dependent activation and a single-channel conductance of about 3 picosiemens. Also presents an inwardly rectifying current, thus reducing its already small outward conductance of potassium ions, which is particularly the case when the membrane potential displays positive values, above + 20 mV. The inward rectification could be due to a blockade of the outward current by intracellular divalent cations such as calcium and magnesium and could also be due to an intrinsic property of the channel pore, independent of intracellular divalent ions. There are three positively charged amino acids in the S6 transmembrane domain, close to the pore, that collectively control the conductance and rectification through an electrostatic mechanism. Additionally, electrostatic contributions from these residues also play an important role in determining the intrinsic open probability of the channel in the absence of calcium, affecting the apparent calcium affinity for activation. Forms an heteromeric complex with calmodulin, which is constitutively associated in a calcium-independent manner. Channel opening is triggered when calcium binds the calmodulin resulting in a rotary movement leading to the formation of the dimeric complex to open the gate. Plays a role in the repolarization phase of cardiac action potential. The protein is Small conductance calcium-activated potassium channel protein 2 of Homo sapiens (Human).